The chain runs to 223 residues: 2-C-methyl-D-erythritol 4-phosphate cytidylyltransferase (223 aa).

The protein belongs to the IspD/TarI cytidylyltransferase family. IspD subfamily.

It carries out the reaction 2-C-methyl-D-erythritol 4-phosphate + CTP + H(+) = 4-CDP-2-C-methyl-D-erythritol + diphosphate. The protein operates within isoprenoid biosynthesis; isopentenyl diphosphate biosynthesis via DXP pathway; isopentenyl diphosphate from 1-deoxy-D-xylulose 5-phosphate: step 2/6. In terms of biological role, catalyzes the formation of 4-diphosphocytidyl-2-C-methyl-D-erythritol from CTP and 2-C-methyl-D-erythritol 4-phosphate (MEP). The polypeptide is 2-C-methyl-D-erythritol 4-phosphate cytidylyltransferase (Prochlorococcus marinus (strain MIT 9215)).